An 891-amino-acid chain; its full sequence is Putative alpha,alpha-trehalose-phosphate synthase [UDP-forming] 100 kDa subunit (891 aa).

At Thr88 the chain carries Phosphothreonine. Residues Thr88–Arg126 form a disordered region. A compositionally biased stretch (polar residues) spans Gly106 to Arg124. Residues Ser108 and Ser109 each carry the phosphoserine modification. The interval Ala132 to Lys613 is glycosyltransferase.

This sequence in the N-terminal section; belongs to the glycosyltransferase 20 family.

It carries out the reaction D-glucose 6-phosphate + UDP-alpha-D-glucose = alpha,alpha-trehalose 6-phosphate + UDP + H(+). The chain is Putative alpha,alpha-trehalose-phosphate synthase [UDP-forming] 100 kDa subunit from Schizosaccharomyces pombe (strain 972 / ATCC 24843) (Fission yeast).